The following is a 442-amino-acid chain: Proline--tRNA ligase (442 aa).

This sequence belongs to the class-II aminoacyl-tRNA synthetase family. ProS type 2 subfamily. As to quaternary structure, homodimer.

It is found in the cytoplasm. It carries out the reaction tRNA(Pro) + L-proline + ATP = L-prolyl-tRNA(Pro) + AMP + diphosphate. Catalyzes the attachment of proline to tRNA(Pro) in a two-step reaction: proline is first activated by ATP to form Pro-AMP and then transferred to the acceptor end of tRNA(Pro). In Brucella abortus (strain S19), this protein is Proline--tRNA ligase.